The sequence spans 1226 residues: AF4/FMR2 family member 3 (1226 aa).

A compositionally biased stretch (basic and acidic residues) spans 24-37; sequence RNALRRKERERRNQ. Disordered regions lie at residues 24-65, 116-164, 197-299, 323-496, and 523-728; these read RNAL…GDEL, SRAQ…RATQ, ERPP…GETN, KVEP…SNQY, and IKST…SINA. Over residues 42-52 the composition is skewed to polar residues; the sequence is DDGTFNSSYSL. Over residues 123-132 the composition is skewed to low complexity; sequence SSICSTTTST. Composition is skewed to polar residues over residues 251–261 and 334–344; these read LKSSSETSVHC and KDSQLVSSGHN. Low complexity predominate over residues 381-392; it reads QQAAQRTALRAL. Residues 396–408 show a composition bias toward polar residues; the sequence is AVVQQPNCRTSVP. Residues 409–445 show a composition bias toward low complexity; that stretch reads SSKGSSSSSSSGSSSSSSDSESSSGSDSETESSSSES. Polar residues predominate over residues 485–496; that stretch reads QNESHGSESNQY. Over residues 523–533 the composition is skewed to basic and acidic residues; sequence IKSTCKEEQRP. Low complexity-rich tracts occupy residues 550-561 and 569-579; these read PPAAVAVAVSAA and CAPAENAPAPA. A compositionally biased stretch (basic and acidic residues) spans 589–607; the sequence is RRTERTSAGDGANCHRPEE. A compositionally biased stretch (low complexity) spans 668–678; sequence TESSSSSSSSD. Residues 692 to 705 show a composition bias toward polar residues; it reads KAQTVAASASSGND. Position 755 is a phosphoserine (S755). Disordered stretches follow at residues 783–856, 879–964, and 1100–1138; these read PQEP…LSAN, PISP…RDCK, and AAQAPSPWGASGKSTGTPSPMSPNPSPASSVGSQGSLSN. Residues 830 to 842 are compositionally biased toward basic and acidic residues; sequence REIKKSQGEKDSS. Over residues 843–856 the composition is skewed to polar residues; sequence SRLATSTSNTLSAN. S881 is subject to Phosphoserine. Polar residues predominate over residues 894 to 909; the sequence is EDLTSSSRPNGNSLFT.

The protein belongs to the AF4 family. As to expression, preferentially expressed in lymphoid tissues, highest levels being found in the thymus.

The protein resides in the nucleus. Functionally, putative transcription activator that may function in lymphoid development and oncogenesis. Binds, in vitro, to double-stranded DNA. This chain is AF4/FMR2 family member 3, found in Homo sapiens (Human).